Here is a 466-residue protein sequence, read N- to C-terminus: MAKTLYEKLFDAHVVYEAENETPLLYIDRHLVHEVTSPQAFDGLRAHGRPVRQPGKTFATMDHNVSTQTKDINACGEMARIQMQELIKNCKEFGVELYDLNHPYQGIVHVMGPEQGVTLPGMTIVCGDSHTATHGAFGALAFGIGTSEVEHVLATQTLKQGRAKTMKIEVQGKAAPGITAKDIVLAIIGKTGSAGGTGHVVEFCGEAIRDLSMEGRMTLCNMAIEMGAKAGLVAPDETTFNYVKGRLHAPKGKDFDDAVAYWKTLQTDEGATFDTVVTLQAEEISPQVTWGTNPGQVISVNDNIPDPASFADPVERASAEKALAYMGLKPGIPLTEVAIDKVFIGSCTNSRIEDLRAAAEIAKGRKVAPGVQALVVPGSGQVKAQAEAEGLDKIFIEAGFEWRLPGCSMCLAMNNDRLNPGERCASTSNRNFEGRQGRGGRTHLVSPAMAAAAAVTGHFADIRNIK.

3 residues coordinate [4Fe-4S] cluster: C347, C407, and C410.

It belongs to the aconitase/IPM isomerase family. LeuC type 1 subfamily. Heterodimer of LeuC and LeuD. [4Fe-4S] cluster is required as a cofactor.

It catalyses the reaction (2R,3S)-3-isopropylmalate = (2S)-2-isopropylmalate. It participates in amino-acid biosynthesis; L-leucine biosynthesis; L-leucine from 3-methyl-2-oxobutanoate: step 2/4. Functionally, catalyzes the isomerization between 2-isopropylmalate and 3-isopropylmalate, via the formation of 2-isopropylmaleate. This is 3-isopropylmalate dehydratase large subunit from Shigella boydii serotype 4 (strain Sb227).